A 473-amino-acid chain; its full sequence is UDP-N-acetylmuramate--L-alanine ligase (473 aa).

123–129 (GTHGKTT) serves as a coordination point for ATP.

Belongs to the MurCDEF family.

Its subcellular location is the cytoplasm. The enzyme catalyses UDP-N-acetyl-alpha-D-muramate + L-alanine + ATP = UDP-N-acetyl-alpha-D-muramoyl-L-alanine + ADP + phosphate + H(+). Its pathway is cell wall biogenesis; peptidoglycan biosynthesis. Cell wall formation. The protein is UDP-N-acetylmuramate--L-alanine ligase of Marinomonas sp. (strain MWYL1).